Reading from the N-terminus, the 1028-residue chain is Endosome/lysosome-associated apoptosis and autophagy regulator family member 2 (1028 aa).

An N-terminal signal peptide occupies residues 1–47 (MLLLTLRRAKGRDRGRPAGGPRRALSLPWSPAWICCWALAGCQAVWA). Residues 48–928 (GDSSSSGRPL…TCETVDFWLK (881 aa)) lie on the Extracellular side of the membrane. Asn-168 carries N-linked (GlcNAc...) asparagine glycosylation. 3 disulfide bridges follow: Cys-292–Cys-309, Cys-322–Cys-345, and Cys-325–Cys-357. N-linked (GlcNAc...) asparagine glycosylation is found at Asn-404 and Asn-690. Residues 671-876 (SDCFFYHEKE…LWESAEACPL (206 aa)) enclose the MRH domain. 4 disulfides stabilise this stretch: Cys-673–Cys-719, Cys-729–Cys-757, Cys-826–Cys-862, and Cys-838–Cys-874. Residues 929–949 (VGAGVGAFTAVLLVALTCYFW) form a helical membrane-spanning segment. At 950–1028 (KKNQKLEYKY…QLKSSRCPNI (79 aa)) the chain is on the cytoplasmic side. Ser-1017 carries the phosphoserine modification.

This sequence belongs to the ELAPOR family.

Its subcellular location is the cell membrane. In terms of biological role, functions as a regulator of the BMP signaling pathway and may be involved in epidermal differentiation. In Mus musculus (Mouse), this protein is Endosome/lysosome-associated apoptosis and autophagy regulator family member 2.